Consider the following 193-residue polypeptide: Ion-translocating oxidoreductase complex subunit A (193 aa).

6 helical membrane-spanning segments follow: residues 5-25, 38-58, 65-85, 102-122, 134-154, and 171-191; these read LLILVSTILVNNFVLVQFLGL, AMGMSLATTFVLTLSSLCSYL, APLGMEFLKTITFILVIAVVV, VLGIFLPLITTNCAVLGVALL, ILYGFGAAVGFSLVLTLFSAM, and AIGMITAGLMSLAFLGFTGLV.

It belongs to the NqrDE/RnfAE family. In terms of assembly, the complex is composed of six subunits: RnfA, RnfB, RnfC, RnfD, RnfE and RnfG.

It localises to the cell inner membrane. Functionally, part of a membrane-bound complex that couples electron transfer with translocation of ions across the membrane. This chain is Ion-translocating oxidoreductase complex subunit A, found in Hahella chejuensis (strain KCTC 2396).